Reading from the N-terminus, the 215-residue chain is S-crystallin 2 (215 aa).

In terms of domain architecture, GST N-terminal spans 2 to 80; that stretch reads PSYTLHYFNH…YLAREFGFHG (79 aa). The GST C-terminal domain maps to 82–215; sequence NNLDMARVDF…YLKSRSSTDF (134 aa).

The protein belongs to the GST superfamily. Lens.

S-crystallins are structural components of squids and octopi eye lens. Contains relatively little GST activity (1/1000 of that of mammalian GST enzyme). This Octopus vulgaris (Common octopus) protein is S-crystallin 2 (OCTS2).